The primary structure comprises 637 residues: Sodium-dependent phosphate transport protein 2A (637 aa).

The Cytoplasmic segment spans residues 1–103; that stretch reads MMSYSERLGG…LAQVGTKLLK (103 aa). Phosphoserine is present on residues Ser-14 and Ser-34. The chain crosses the membrane as a helical span at residues 104–125; that stretch reads VPLMLGFLYLFVCSLDVLSSAF. At 126 to 145 the chain is on the extracellular side; it reads QLAGGKVAGDIFKDNAILSN. A helical membrane pass occupies residues 146 to 163; sequence PVAGLVVGILVTVLVQSS. At 164–216 the chain is on the cytoplasmic side; the sequence is STSTSIIVSMVSSGLLEVSSAIPIIMGSNIGTSVTNTIVALMQAGDRTDFRRA. Residues 217–236 traverse the membrane as a helical segment; that stretch reads FAGATVHDCFNWLSVLVLLP. Disulfide bonds link Cys-225/Cys-520 and Cys-306/Cys-334. The Extracellular segment spans residues 237-345; it reads LEAATGYLHH…HIFVDTGLPD (109 aa). Asn-298 and Asn-328 each carry an N-linked (GlcNAc...) asparagine glycan. A helical transmembrane segment spans residues 346 to 368; the sequence is LAVGLILLAGSLVVLCTCLILLV. Residues 369 to 410 are Cytoplasmic-facing; it reads KMLNSLLKGQVANVIQKVINTDFPAPFTWVTGYFAMVVGASM. A helical membrane pass occupies residues 411 to 434; it reads TFVVQSSSVFTSAITPLIGLGVIS. Residues 435-464 lie on the Extracellular side of the membrane; it reads IERAYPLTLGSNIGTTTTAILAALASPREK. The helical transmembrane segment at 465–485 threads the bilayer; sequence LSSSFQIALCHFFFNISGILL. Over 486–511 the chain is Cytoplasmic; it reads WYPLPCTRLPIRMAKALGKRTAKYRW. The residue at position 506 (Thr-506) is a Phosphothreonine; by PKC. A helical membrane pass occupies residues 512-532; the sequence is FAVLYLLVCFLLLPSLVFGIS. Over 533-537 the chain is Extracellular; it reads MAGWQ. A helical transmembrane segment spans residues 538–559; the sequence is AMVGVGTPFGALLAFVVLVNVL. Over 560 to 637 the chain is Cytoplasmic; it reads QSRSPGHLPK…LPAHHNATRL (78 aa). Ser-605 bears the Phosphoserine mark. Thr-621 carries the post-translational modification Phosphothreonine. Residue Ser-623 is modified to Phosphoserine.

This sequence belongs to the SLC34A transporter family. Interacts via its C-terminal region with NHERF4. Interacts with NHERF1. Interacts with TMEM174; regulates SLC34A1 internalization by PTH and FGF23. As to expression, kidney.

It localises to the apical cell membrane. Its subcellular location is the cell membrane. It catalyses the reaction 3 Na(+)(out) + phosphate(out) = 3 Na(+)(in) + phosphate(in). With respect to regulation, transport activity is significantly increased in response to dietary phosphate deprivation. Involved in actively transporting phosphate into cells via Na(+) cotransport in the renal brush border membrane. The cotransport has a Na(+):Pi stoichiometry of 3:1 and is electrogenic. This Rattus norvegicus (Rat) protein is Sodium-dependent phosphate transport protein 2A.